The sequence spans 389 residues: Maintenance of mitochondrial morphology protein 1-1 (389 aa).

Residues methionine 1 to glycine 22 lie on the Lumenal side of the membrane. A helical membrane pass occupies residues phenylalanine 23–phenylalanine 43. The Cytoplasmic portion of the chain corresponds to serine 44 to arginine 389. The region spanning glutamine 83–proline 278 is the SMP-LTD domain. 2 disordered regions span residues lysine 283 to isoleucine 345 and phenylalanine 360 to arginine 389. The segment covering methionine 330–asparagine 341 has biased composition (polar residues).

Belongs to the MMM1 family. In terms of assembly, homodimer. Component of the ER-mitochondria encounter structure (ERMES) or MDM complex, composed of MMM1, MDM10, MDM12 and MDM34. An MMM1 homodimer associates with one molecule of MDM12 on each side in a pairwise head-to-tail manner, and the SMP-LTD domains of MMM1 and MDM12 generate a continuous hydrophobic tunnel for phospholipid trafficking.

The protein localises to the endoplasmic reticulum membrane. In terms of biological role, component of the ERMES/MDM complex, which serves as a molecular tether to connect the endoplasmic reticulum (ER) and mitochondria. Components of this complex are involved in the control of mitochondrial shape and protein biogenesis, and function in nonvesicular lipid trafficking between the ER and mitochondria. The MDM12-MMM11 subcomplex functions in the major beta-barrel assembly pathway that is responsible for biogenesis of all outer membrane beta-barrel proteins, and acts in a late step after the SAM complex. The MDM10-MDM12-MMM1 subcomplex further acts in the TOM40-specific pathway after the action of the MDM12-MMM1 complex. Essential for establishing and maintaining the structure of mitochondria and maintenance of mtDNA nucleoids. This is Maintenance of mitochondrial morphology protein 1-1 from Yarrowia lipolytica (strain CLIB 122 / E 150) (Yeast).